Reading from the N-terminus, the 347-residue chain is Large ribosomal subunit protein uL3 (347 aa).

Residues 325–347 (RPPKKKPPVERPQITYISRESKQ) are disordered.

It belongs to the universal ribosomal protein uL3 family. Part of the 50S ribosomal subunit. Forms a cluster with proteins L14 and L24e.

One of the primary rRNA binding proteins, it binds directly near the 3'-end of the 23S rRNA, where it nucleates assembly of the 50S subunit. The polypeptide is Large ribosomal subunit protein uL3 (Thermococcus onnurineus (strain NA1)).